The chain runs to 631 residues: DNA mismatch repair protein MutL (631 aa).

Belongs to the DNA mismatch repair MutL/HexB family.

This protein is involved in the repair of mismatches in DNA. It is required for dam-dependent methyl-directed DNA mismatch repair. May act as a 'molecular matchmaker', a protein that promotes the formation of a stable complex between two or more DNA-binding proteins in an ATP-dependent manner without itself being part of a final effector complex. This Mannheimia succiniciproducens (strain KCTC 0769BP / MBEL55E) protein is DNA mismatch repair protein MutL.